The primary structure comprises 238 residues: tRNA (guanine-N(7)-)-methyltransferase (238 aa).

The S-adenosyl-L-methionine site is built by Glu68, Glu93, Asp120, and Asp143. The active site involves Asp143. Substrate contacts are provided by residues Lys147, Asp179, and Thr216–Glu219.

The protein belongs to the class I-like SAM-binding methyltransferase superfamily. TrmB family.

The enzyme catalyses guanosine(46) in tRNA + S-adenosyl-L-methionine = N(7)-methylguanosine(46) in tRNA + S-adenosyl-L-homocysteine. It participates in tRNA modification; N(7)-methylguanine-tRNA biosynthesis. Its function is as follows. Catalyzes the formation of N(7)-methylguanine at position 46 (m7G46) in tRNA. This chain is tRNA (guanine-N(7)-)-methyltransferase, found in Shewanella sp. (strain MR-4).